A 240-amino-acid polypeptide reads, in one-letter code: Probable transcriptional regulatory protein HPP12_0160 (240 aa).

The protein belongs to the TACO1 family.

The protein resides in the cytoplasm. This is Probable transcriptional regulatory protein HPP12_0160 from Helicobacter pylori (strain P12).